We begin with the raw amino-acid sequence, 951 residues long: Valine--tRNA ligase (951 aa).

A 'HIGH' region motif is present at residues 42 to 52; the sequence is PNVTGSLHMGH. The short motif at 554-558 is the 'KMSKS' region element; that stretch reads KMSKS. Residue K557 coordinates ATP. Residues 880–944 are a coiled coil; it reads AGLINKEDEL…AEAKAKLIEQ (65 aa).

Belongs to the class-I aminoacyl-tRNA synthetase family. ValS type 1 subfamily. Monomer.

Its subcellular location is the cytoplasm. It carries out the reaction tRNA(Val) + L-valine + ATP = L-valyl-tRNA(Val) + AMP + diphosphate. In terms of biological role, catalyzes the attachment of valine to tRNA(Val). As ValRS can inadvertently accommodate and process structurally similar amino acids such as threonine, to avoid such errors, it has a 'posttransfer' editing activity that hydrolyzes mischarged Thr-tRNA(Val) in a tRNA-dependent manner. This Shigella dysenteriae serotype 1 (strain Sd197) protein is Valine--tRNA ligase.